The chain runs to 162 residues: Transcriptional regulator MraZ (162 aa).

SpoVT-AbrB domains follow at residues 11-62 and 98-141; these read EHPS…GLSV and AVEC…SRDT.

It belongs to the MraZ family. As to quaternary structure, forms oligomers.

The protein localises to the cytoplasm. It is found in the nucleoid. The polypeptide is Transcriptional regulator MraZ (Pelobacter propionicus (strain DSM 2379 / NBRC 103807 / OttBd1)).